A 303-amino-acid chain; its full sequence is Coenzyme PQQ synthesis protein B (303 aa).

Belongs to the PqqB family.

Its pathway is cofactor biosynthesis; pyrroloquinoline quinone biosynthesis. Functionally, may be involved in the transport of PQQ or its precursor to the periplasm. This Pseudomonas putida (strain W619) protein is Coenzyme PQQ synthesis protein B.